The chain runs to 418 residues: Gamma-glutamyl phosphate reductase (418 aa).

Belongs to the gamma-glutamyl phosphate reductase family.

The protein resides in the cytoplasm. The catalysed reaction is L-glutamate 5-semialdehyde + phosphate + NADP(+) = L-glutamyl 5-phosphate + NADPH + H(+). Its pathway is amino-acid biosynthesis; L-proline biosynthesis; L-glutamate 5-semialdehyde from L-glutamate: step 2/2. Its function is as follows. Catalyzes the NADPH-dependent reduction of L-glutamate 5-phosphate into L-glutamate 5-semialdehyde and phosphate. The product spontaneously undergoes cyclization to form 1-pyrroline-5-carboxylate. In Nitrosococcus oceani (strain ATCC 19707 / BCRC 17464 / JCM 30415 / NCIMB 11848 / C-107), this protein is Gamma-glutamyl phosphate reductase.